A 169-amino-acid chain; its full sequence is S-ribosylhomocysteine lyase (169 aa).

Fe cation contacts are provided by H54, H58, and C128.

It belongs to the LuxS family. As to quaternary structure, homodimer. Fe cation is required as a cofactor.

The enzyme catalyses S-(5-deoxy-D-ribos-5-yl)-L-homocysteine = (S)-4,5-dihydroxypentane-2,3-dione + L-homocysteine. Functionally, involved in the synthesis of autoinducer 2 (AI-2) which is secreted by bacteria and is used to communicate both the cell density and the metabolic potential of the environment. The regulation of gene expression in response to changes in cell density is called quorum sensing. Catalyzes the transformation of S-ribosylhomocysteine (RHC) to homocysteine (HC) and 4,5-dihydroxy-2,3-pentadione (DPD). The sequence is that of S-ribosylhomocysteine lyase from Aeromonas hydrophila subsp. hydrophila (strain ATCC 7966 / DSM 30187 / BCRC 13018 / CCUG 14551 / JCM 1027 / KCTC 2358 / NCIMB 9240 / NCTC 8049).